Consider the following 218-residue polypeptide: Mitochondrial fission factor (218 aa).

The Cytoplasmic portion of the chain corresponds to 1–198; it reads MAEISRIQYE…ENKERAKREM (198 aa). At threonine 89 the chain carries Phosphothreonine. Residues serine 129, serine 131, serine 146, and serine 171 each carry the phosphoserine modification. A coiled-coil region spans residues 167-198; it reads VDAASLRRQIIKLNRRLQLLEEENKERAKREM. Residues 199 to 216 traverse the membrane as a helical; Anchor for type IV membrane protein segment; sequence VMYSITVAFWLLNSWLWF. The Mitochondrial intermembrane portion of the chain corresponds to 217–218; the sequence is RR.

It belongs to the Tango11 family. Homodimer. Interacts with DNM1L. Interacts with C11orf65/MFI; the interaction inhibits MFF interaction with DNM1L.

It is found in the mitochondrion outer membrane. It localises to the peroxisome. Its subcellular location is the cytoplasmic vesicle. The protein resides in the secretory vesicle. The protein localises to the synaptic vesicle. In terms of biological role, plays a role in mitochondrial and peroxisomal fission. Promotes the recruitment and association of the fission mediator dynamin-related protein 1 (DNM1L) to the mitochondrial surface. May be involved in regulation of synaptic vesicle membrane dynamics by recruitment of DNM1L to clathrin-containing vesicles. The polypeptide is Mitochondrial fission factor (Mff) (Rattus norvegicus (Rat)).